A 126-amino-acid polypeptide reads, in one-letter code: UPF0102 protein Mlg_2205 (126 aa).

Belongs to the UPF0102 family.

This Alkalilimnicola ehrlichii (strain ATCC BAA-1101 / DSM 17681 / MLHE-1) protein is UPF0102 protein Mlg_2205.